Here is a 555-residue protein sequence, read N- to C-terminus: MAQFVYTMHRVGKVVPPKRHILKNISLSFFPGAKIGVLGLNGAGKSTLLRIMAGIDKDIEGEARPQPDIKIGYLPQEPQLNPEHTVRESIEEAVSEVVNALKRLDEVYALYADPDADFDKLAAEQGRLEEIIQAHDGHNLNVQLERAADALRLPDWDAKIANLSGGERRRVALCRLLLEKPDMLLLDEPTNHLDAESVAWLERFLHDFEGTVVAITHDRYFLDNVAGWILELDRGEGIPWEGNYSSWLEQKDQRLAQEASQEAARRKSIEKELEWVRQGTKGRQSKGKARLARFEELNSTEYQKRNETNELFIPPGPRLGDKVLEVSNLRKSYGDRLLIDDLSFSIPKGAIVGIIGPNGAGKSTLFRMISGQEQPDSGTITLGETVKLASVDQFRDSMDNSKTVWEEVSGGLDIMKIGNTEMPSRAYVGRFNFKGVDQGKRVGELSGGERGRLHLAKLLQVGGNMLLLDEPTNDLDIETLRALENALLEFPGCAMVISHDRWFLDRIATHILDYQDEGKVEFFEGNFTEYEEYKKRTLGADALEPKRIKYKRIAK.

2 consecutive ABC transporter domains span residues 6 to 259 (YTMH…AQEA) and 324 to 550 (LEVS…RIKY). An ATP-binding site is contributed by 39–46 (GLNGAGKS). The interval 95–139 (SEVVNALKRLDEVYALYADPDADFDKLAAEQGRLEEIIQAHDGHN) is arm. Residues 242–322 (GNYSSWLEQK…IPPGPRLGDK (81 aa)) are ptIM. 356 to 363 (GPNGAGKS) provides a ligand contact to ATP.

This sequence belongs to the ABC transporter superfamily. ABCF family. Translational throttle EttA subfamily. In terms of assembly, monomer. Probably contacts ribosomal proteins L1, L5, L33 and S7, the 16S and 23S rRNA and the P-site containing tRNA(fMet).

The protein localises to the cytoplasm. It catalyses the reaction ATP + H2O = ADP + phosphate + H(+). Its function is as follows. A translation factor that gates the progression of the 70S ribosomal initiation complex (IC, containing tRNA(fMet) in the P-site) into the translation elongation cycle by using a mechanism sensitive to the ATP/ADP ratio. Binds to the 70S ribosome E-site where it modulates the state of the translating ribosome during subunit translocation. ATP hydrolysis probably frees it from the ribosome, which can enter the elongation phase. In Escherichia coli O157:H7, this protein is Energy-dependent translational throttle protein EttA.